A 229-amino-acid chain; its full sequence is 2-C-methyl-D-erythritol 4-phosphate cytidylyltransferase (229 aa).

The protein belongs to the IspD/TarI cytidylyltransferase family. IspD subfamily.

The catalysed reaction is 2-C-methyl-D-erythritol 4-phosphate + CTP + H(+) = 4-CDP-2-C-methyl-D-erythritol + diphosphate. It participates in isoprenoid biosynthesis; isopentenyl diphosphate biosynthesis via DXP pathway; isopentenyl diphosphate from 1-deoxy-D-xylulose 5-phosphate: step 2/6. Catalyzes the formation of 4-diphosphocytidyl-2-C-methyl-D-erythritol from CTP and 2-C-methyl-D-erythritol 4-phosphate (MEP). The sequence is that of 2-C-methyl-D-erythritol 4-phosphate cytidylyltransferase from Shouchella clausii (strain KSM-K16) (Alkalihalobacillus clausii).